The sequence spans 132 residues: Small ribosomal subunit protein uS8 (132 aa).

It belongs to the universal ribosomal protein uS8 family. In terms of assembly, part of the 30S ribosomal subunit. Contacts proteins S5 and S12.

One of the primary rRNA binding proteins, it binds directly to 16S rRNA central domain where it helps coordinate assembly of the platform of the 30S subunit. This Afipia carboxidovorans (strain ATCC 49405 / DSM 1227 / KCTC 32145 / OM5) (Oligotropha carboxidovorans) protein is Small ribosomal subunit protein uS8.